Reading from the N-terminus, the 518-residue chain is Cytochrome P450 monooxygenase COX1 (518 aa).

A helical membrane pass occupies residues 7 to 25 (VLIALSSIVVAYFVKTALA). N-linked (GlcNAc...) asparagine glycans are attached at residues N48, N100, N292, N302, and N351. C450 is a heme binding site. N-linked (GlcNAc...) asparagine glycosylation is present at N457.

It belongs to the cytochrome P450 family. Heme serves as cofactor.

The protein resides in the membrane. Its pathway is secondary metabolite biosynthesis. Functionally, cytochrome P450 monooxygenase; part of the gene cluster that mediates the biosynthesis of alpha-cuprenene and oxidized derivatives. The alpha-cuprenene synthase COP6 is the only sesquiterpene synthase identified in C.cinereus that appears to be part of a biosynthetic gene cluster and is highly specific since it catalyzes the cyclization of (2E,6E)-farnesyl diphosphate into only one product, alpha-cuprenene. The cytochrome P450 monooxygenase COX2 then oxidizes the cyclohexadiene ring of alpha-cuprenene at positions 1 and 4, yielding first alpha-cuparene, followed by alpha-cuparophenol and a further yet unidentified compound resulting from one additional oxidation step. The cytochrome P450 monooxygenase COX1 then likely catalyzes the oxidation at position 9 of the pentane ring of alpha-cuprenene to give the corresponding hydroxy or ketone derivatives. The polypeptide is Cytochrome P450 monooxygenase COX1 (Coprinopsis cinerea (strain Okayama-7 / 130 / ATCC MYA-4618 / FGSC 9003) (Inky cap fungus)).